Consider the following 1065-residue polypeptide: Cellulose synthase A catalytic subunit 3 [UDP-forming] (1065 aa).

At 1-260 (MESEGETAGK…PSSRINPYRM (260 aa)) the chain is on the cytoplasmic side. Ser-3 is modified (phosphoserine). 8 residues coordinate Zn(2+): Cys-20, Cys-23, Cys-39, Cys-42, Cys-47, Cys-50, Cys-62, and Cys-65. The RING-type; degenerate zinc finger occupies 20 to 66 (CQICSDNVGKTVDGDRFVACDICSFPVCRPCYEYERKDGNQSCPQCK). 3 positions are modified to phosphoserine: Ser-151, Ser-211, and Ser-216. The chain crosses the membrane as a helical span at residues 261 to 281 (VIMLRLVILCLFLHYRITNPV). The Extracellular segment spans residues 282 to 283 (PN). Residues 284–304 (AFALWLVSVICEIWFALSWIL) traverse the membrane as a helical segment. Residues 305–842 (DQFPKWFPVN…LERFAYVNTT (538 aa)) are Cytoplasmic-facing. The UDP-alpha-D-glucose site is built by Ser-343, Lys-349, Glu-350, and Asp-379. The active site involves Asp-379. The stretch at 433-457 (VKDRRAMKREYEEFKIRINALVSKA) forms a coiled coil. Position 520 (Lys-520) interacts with UDP-alpha-D-glucose. Residues Lys-521 and Asp-545 each coordinate Mn(2+). The tract at residues 643-672 (SKLCGGSRKKNSKAKKESDKKKSGRHTDST) is disordered. Positions 656 to 670 (AKKESDKKKSGRHTD) are enriched in basic and acidic residues. Residue Asp-765 is part of the active site. The helical transmembrane segment at 843 to 863 (IYPITSIPLLMYCTLPAVCLF) threads the bilayer. Residues 864 to 874 (TNQFIIPQISN) lie on the Extracellular side of the membrane. The helical transmembrane segment at 875–895 (IASIWFLSLFLSIFATGILEM) threads the bilayer. The Cytoplasmic portion of the chain corresponds to 896 to 910 (RWSGVGIDEWWRNEQ). A helical transmembrane segment spans residues 911 to 931 (FWVIGGVSAHLFAVFQGILKV). The Extracellular segment spans residues 932–961 (LAGIDTNFTVTSKASDEDGDFAELYLFKWT). A glycan (N-linked (GlcNAc...) asparagine) is linked at Asn-938. Residues 962 to 982 (TLLIPPTTLLIVNLVGVVAGV) form a helical membrane-spanning segment. Topologically, residues 983-993 (SYAINSGYQSW) are cytoplasmic. The helical transmembrane segment at 994–1014 (GPLFGKLFFAFWVIVHLYPFL) threads the bilayer. Residues 1015 to 1023 (KGLMGRQNR) lie on the Extracellular side of the membrane. Residues 1024-1044 (TPTIVVVWSVLLASIFSLLWV) traverse the membrane as a helical segment. Over 1045–1065 (RIDPFTSRVTGPDILECGINC) the chain is Cytoplasmic.

This sequence belongs to the glycosyltransferase 2 family. Plant cellulose synthase subfamily. In terms of assembly, homodimer. Interacts with CESA1 and CESA6. Interacts with STL1 and STL2, but not with GOT1. Binds to CSI1 and CSI3. Interacts with PAT24/TIP1. Zn(2+) serves as cofactor. Mn(2+) is required as a cofactor. Palmitoylated, in part by PAT24/TIP1. In terms of tissue distribution, expressed in young plants, flowers and roots, and to a lower extent in leaves and stems. Localized in all cells except meristematic cells. Accumulates particularly in root caps, root hairs, epidermal layer, midveins of leaves and anthers. Not present in old tissues.

It is found in the cell membrane. Its subcellular location is the golgi apparatus membrane. It catalyses the reaction [(1-&gt;4)-beta-D-glucosyl](n) + UDP-alpha-D-glucose = [(1-&gt;4)-beta-D-glucosyl](n+1) + UDP + H(+). The protein operates within glycan metabolism; plant cellulose biosynthesis. Its function is as follows. Catalytic subunit of cellulose synthase terminal complexes ('rosettes'), required for beta-1,4-glucan microfibril crystallization, a major mechanism of the cell wall formation. Involved in the primary cell wall formation, especially in roots. This is Cellulose synthase A catalytic subunit 3 [UDP-forming] from Arabidopsis thaliana (Mouse-ear cress).